The chain runs to 1038 residues: Ribosome quality control complex subunit 2 (1038 aa).

Positions 350–383 (ALRIQNQESQAQKKIDDARAENDRKIQALLDVQE) form a coiled coil. 3 disordered regions span residues 459 to 499 (LNTS…MKRK), 708 to 824 (KTSG…DEPG), and 877 to 898 (QRKK…KREK). Residues 713-768 (EDNGDDDEEEEEEEEEEEEEEEEEEEEEEEEKEEEEKEEEQQQDEDDSNEVNGLEK) adopt a coiled-coil conformation. Residues 714-761 (DNGDDDEEEEEEEEEEEEEEEEEEEEEEEEKEEEEKEEEQQQDEDDSN) show a composition bias toward acidic residues. The segment covering 780–794 (SFEHDNLEKDIEKHC) has biased composition (basic and acidic residues). A compositionally biased stretch (polar residues) spans 795–805 (TISSDTDSDSG). S797 bears the Phosphoserine mark. A coiled-coil region spans residues 830–912 (IENINSNVRG…QALKFTKKEK (83 aa)). Positions 877-894 (QRKKEEIMKREVREDRKN) are enriched in basic and acidic residues.

The protein belongs to the NEMF family. Component of the ribosome quality control complex (RQC), composed of the E3 ubiquitin ligase RKR1/LTN1, RQC1 and RQC2, as well as CDC48 and its ubiquitin-binding cofactors associated with the 60S ribosomal subunit. RQC2 binds to the 40S-binding surface of tRNAs.

Its subcellular location is the cytoplasm. In terms of biological role, key component of the ribosome quality control complex (RQC), a ribosome-associated complex that mediates the extraction of incompletely synthesized nascent chains from stalled ribosomes as well as their ubiquitin-mediated proteasomal degradation. Thereby, frees 60S subunit ribosomes from the stalled translation complex and prevents the accumulation of nascent polypeptide chains that are potentially toxic for the cell. Within the RQC complex, RQC2 specifically binds stalled 60S ribosomal subunits by recognizing an exposed, nascent chain-conjugated tRNA moiety and promotes the recruitment of RKR1/LTN1 to stalled 60S subunits. Following binding to stalled 60S ribosomal subunits, RQC2 mediates CAT tailing by recruiting alanine- and threonine-charged tRNA to the A-site and directing the elongation of stalled nascent chains independently of mRNA or 40S subunits, leading to non-templated C-terminal Ala and Thr extensions (CAT tails). CAT tails promote the RKR1/LTN1-mediated ubiquitination of incompletely synthesized nascent polypeptides: CAT tailing facilitates RKR1/LTN1-dependent ubiquitination by exposing lysine residues that would otherwise remain buried in the ribosomal exit tunnel. Following ubiquitination, incompletely synthesized nascent polypeptides are recognized by CDC48 and degraded by the proteasome. CAT-tailed proteins tend to aggregate and sequester chaperones and can induce proteotoxic stress; their RKR1/LTN1-dependent ubiquitination and degradation is required to prevent proteotoxic stress. The polypeptide is Ribosome quality control complex subunit 2 (Saccharomyces cerevisiae (strain ATCC 204508 / S288c) (Baker's yeast)).